The following is a 280-amino-acid chain: Shikimate dehydrogenase (NADP(+)) (280 aa).

Shikimate contacts are provided by residues 20–22 (TLS) and threonine 67. Lysine 71 (proton acceptor) is an active-site residue. Shikimate contacts are provided by asparagine 92 and aspartate 107. Residues 131–135 (GAGGA), 154–159 (NRTIDK), and leucine 224 each bind NADP(+). Position 226 (tyrosine 226) interacts with shikimate. Residue glycine 247 coordinates NADP(+).

The protein belongs to the shikimate dehydrogenase family. In terms of assembly, homodimer.

The catalysed reaction is shikimate + NADP(+) = 3-dehydroshikimate + NADPH + H(+). The protein operates within metabolic intermediate biosynthesis; chorismate biosynthesis; chorismate from D-erythrose 4-phosphate and phosphoenolpyruvate: step 4/7. Involved in the biosynthesis of the chorismate, which leads to the biosynthesis of aromatic amino acids. Catalyzes the reversible NADPH linked reduction of 3-dehydroshikimate (DHSA) to yield shikimate (SA). The chain is Shikimate dehydrogenase (NADP(+)) from Carboxydothermus hydrogenoformans (strain ATCC BAA-161 / DSM 6008 / Z-2901).